A 150-amino-acid polypeptide reads, in one-letter code: Large ribosomal subunit protein bL9 (150 aa).

The protein belongs to the bacterial ribosomal protein bL9 family.

In terms of biological role, binds to the 23S rRNA. The chain is Large ribosomal subunit protein bL9 from Leuconostoc citreum (strain KM20).